A 217-amino-acid polypeptide reads, in one-letter code: Probable transaldolase (217 aa).

K83 serves as the catalytic Schiff-base intermediate with substrate.

It belongs to the transaldolase family. Type 3B subfamily.

Its subcellular location is the cytoplasm. The catalysed reaction is D-sedoheptulose 7-phosphate + D-glyceraldehyde 3-phosphate = D-erythrose 4-phosphate + beta-D-fructose 6-phosphate. It functions in the pathway carbohydrate degradation; pentose phosphate pathway; D-glyceraldehyde 3-phosphate and beta-D-fructose 6-phosphate from D-ribose 5-phosphate and D-xylulose 5-phosphate (non-oxidative stage): step 2/3. In terms of biological role, transaldolase is important for the balance of metabolites in the pentose-phosphate pathway. The sequence is that of Probable transaldolase from Fervidobacterium nodosum (strain ATCC 35602 / DSM 5306 / Rt17-B1).